The chain runs to 242 residues: D-proline reductase subunit gamma (242 aa).

Selenocysteine 152 functions as the Nucleophile in the catalytic mechanism. Selenocysteine 152 is a non-standard amino acid (selenocysteine).

As to quaternary structure, consists of 3 subunits of 23, 26 and 45 kDa (alpha, gamma and beta respectively). The molecular weight of the complex is approximately 870 kDa, suggesting a decameric structure, if all 3 subunits are present in equal stoichiometry. In terms of processing, this subunit is carbonylated in vitro on an unidentified residue.

Its subcellular location is the cytoplasm. It carries out the reaction [PrdC protein]-Se-L-selenocysteinyl-S-L-cysteine + 5-aminopentanoate = [PrdC protein]-L-selenocysteine/L-cysteine + D-proline. D-proline reductase catalyzes the reductive cleavage of a C-N bond in D-proline resulting in the formation of 5-aminovalerate. The alpha subunit has been shown to bind D-proline, presumably via the pyruvoyl group. In Acetoanaerobium sticklandii (strain ATCC 12662 / DSM 519 / JCM 1433 / CCUG 9281 / NCIMB 10654 / HF) (Clostridium sticklandii), this protein is D-proline reductase subunit gamma (prdB).